Here is a 150-residue protein sequence, read N- to C-terminus: SsrA-binding protein (150 aa).

The protein belongs to the SmpB family.

It localises to the cytoplasm. In terms of biological role, required for rescue of stalled ribosomes mediated by trans-translation. Binds to transfer-messenger RNA (tmRNA), required for stable association of tmRNA with ribosomes. tmRNA and SmpB together mimic tRNA shape, replacing the anticodon stem-loop with SmpB. tmRNA is encoded by the ssrA gene; the 2 termini fold to resemble tRNA(Ala) and it encodes a 'tag peptide', a short internal open reading frame. During trans-translation Ala-aminoacylated tmRNA acts like a tRNA, entering the A-site of stalled ribosomes, displacing the stalled mRNA. The ribosome then switches to translate the ORF on the tmRNA; the nascent peptide is terminated with the 'tag peptide' encoded by the tmRNA and targeted for degradation. The ribosome is freed to recommence translation, which seems to be the essential function of trans-translation. This chain is SsrA-binding protein, found in Flavobacterium psychrophilum (strain ATCC 49511 / DSM 21280 / CIP 103535 / JIP02/86).